We begin with the raw amino-acid sequence, 422 residues long: Gamma-glutamyl phosphate reductase (422 aa).

The protein belongs to the gamma-glutamyl phosphate reductase family.

It is found in the cytoplasm. The enzyme catalyses L-glutamate 5-semialdehyde + phosphate + NADP(+) = L-glutamyl 5-phosphate + NADPH + H(+). Its pathway is amino-acid biosynthesis; L-proline biosynthesis; L-glutamate 5-semialdehyde from L-glutamate: step 2/2. Catalyzes the NADPH-dependent reduction of L-glutamate 5-phosphate into L-glutamate 5-semialdehyde and phosphate. The product spontaneously undergoes cyclization to form 1-pyrroline-5-carboxylate. This Nitrosomonas eutropha (strain DSM 101675 / C91 / Nm57) protein is Gamma-glutamyl phosphate reductase.